The sequence spans 78 residues: uncharacterized protein (78 aa).

The interval 20–78 is disordered; the sequence is LQDLFPPHFGNEEADEDDEDGDKYGDDDGEFYGDNDGDNDGDNDGVNDGVGDGPPSTLL. The span at 31-64 shows a compositional bias: acidic residues; it reads EEADEDDEDGDKYGDDDGEFYGDNDGDNDGDNDG.

This is an uncharacterized protein from Dictyostelium discoideum (Social amoeba).